Reading from the N-terminus, the 88-residue chain is HssA/B-like protein 6 (88 aa).

The tract at residues 1–22 (MSILSALTSISNPMKSSNSNVA) is disordered.

It belongs to the hssA/B family.

The sequence is that of HssA/B-like protein 6 (hssl6) from Dictyostelium discoideum (Social amoeba).